The primary structure comprises 269 residues: Novel plant SNARE 13 (269 aa).

At 1–217 the chain is on the cytoplasmic side; that stretch reads MASNLPMSPQ…IGRQVATDKC (217 aa). Residues 33 to 94 are a coiled coil; it reads DKIKDSTRQS…KQSMIKELNS (62 aa). Ser-74 carries the post-translational modification Phosphoserine. Residues 146-208 enclose the t-SNARE coiled-coil homology domain; the sequence is MKRMDETDQA…KKASQLVKEI (63 aa). Residues 218 to 238 traverse the membrane as a helical; Anchor for type IV membrane protein segment; it reads IMGFLFLIVCGVVAIIIVKIV. Residues 239–269 are Vesicular-facing; the sequence is NPNNKDIRDIPGLAPPAQSRKLLYLRNQDYM.

It belongs to the novel plant SNARE family.

It localises to the membrane. Its function is as follows. Vesicle trafficking protein that functions in the secretory pathway. The sequence is that of Novel plant SNARE 13 (NPSN13) from Arabidopsis thaliana (Mouse-ear cress).